A 364-amino-acid polypeptide reads, in one-letter code: tRNA 2-selenouridine synthase (364 aa).

The Rhodanese domain occupies 14–137; sequence LIADTPIIDV…LRQTTIQATI (124 aa). The active-site S-selanylcysteine intermediate is the Cys97.

It belongs to the SelU family. In terms of assembly, monomer.

It carries out the reaction 5-methylaminomethyl-2-thiouridine(34) in tRNA + selenophosphate + (2E)-geranyl diphosphate + H2O + H(+) = 5-methylaminomethyl-2-selenouridine(34) in tRNA + (2E)-thiogeraniol + phosphate + diphosphate. The enzyme catalyses 5-methylaminomethyl-2-thiouridine(34) in tRNA + (2E)-geranyl diphosphate = 5-methylaminomethyl-S-(2E)-geranyl-thiouridine(34) in tRNA + diphosphate. It catalyses the reaction 5-methylaminomethyl-S-(2E)-geranyl-thiouridine(34) in tRNA + selenophosphate + H(+) = 5-methylaminomethyl-2-(Se-phospho)selenouridine(34) in tRNA + (2E)-thiogeraniol. The catalysed reaction is 5-methylaminomethyl-2-(Se-phospho)selenouridine(34) in tRNA + H2O = 5-methylaminomethyl-2-selenouridine(34) in tRNA + phosphate. Functionally, involved in the post-transcriptional modification of the uridine at the wobble position (U34) of tRNA(Lys), tRNA(Glu) and tRNA(Gln). Catalyzes the conversion of 2-thiouridine (S2U-RNA) to 2-selenouridine (Se2U-RNA). Acts in a two-step process involving geranylation of 2-thiouridine (S2U) to S-geranyl-2-thiouridine (geS2U) and subsequent selenation of the latter derivative to 2-selenouridine (Se2U) in the tRNA chain. This Escherichia coli (strain 55989 / EAEC) protein is tRNA 2-selenouridine synthase.